Consider the following 485-residue polypeptide: D-alanine--D-alanyl carrier protein ligase (485 aa).

Thr-144–Ser-145 lines the ATP pocket. Residue Asp-189 participates in D-alanine binding. ATP is bound at residue Asn-284–Thr-289. A D-alanine-binding site is contributed by Val-293. Asp-365 and Lys-473 together coordinate ATP. Lys-473 lines the D-alanine pocket.

This sequence belongs to the ATP-dependent AMP-binding enzyme family. DltA subfamily.

The protein localises to the cytoplasm. The enzyme catalyses holo-[D-alanyl-carrier protein] + D-alanine + ATP = D-alanyl-[D-alanyl-carrier protein] + AMP + diphosphate. It participates in cell wall biogenesis; lipoteichoic acid biosynthesis. Functionally, catalyzes the first step in the D-alanylation of lipoteichoic acid (LTA), the activation of D-alanine and its transfer onto the D-alanyl carrier protein (Dcp) DltC. In an ATP-dependent two-step reaction, forms a high energy D-alanyl-AMP intermediate, followed by transfer of the D-alanyl residue as a thiol ester to the phosphopantheinyl prosthetic group of the Dcp. D-alanylation of LTA plays an important role in modulating the properties of the cell wall in Gram-positive bacteria, influencing the net charge of the cell wall. This is D-alanine--D-alanyl carrier protein ligase from Staphylococcus aureus (strain bovine RF122 / ET3-1).